A 186-amino-acid polypeptide reads, in one-letter code: ADP-ribosylation factor-like protein 6 (186 aa).

Glycine 2 is lipidated: N-myristoyl glycine. Residues 24-31, 69-73, and 130-133 contribute to the GTP site; these read GLDNSGKT, DMSGQ, and NKMD.

Belongs to the small GTPase superfamily. Arf family. As to quaternary structure, interacts with SEC61B, ARL6IP1, ARL6IP2, ARL6IP3, ARL6IP4 ARL6IP5 and ARL6IP6. Interacts (GTP-bound form) with the BBSome a complex that contains BBS1, BBS2, BBS4, BBS5, BBS7, BBS8/TTC8, BBS9 and BBIP10. Interacts (GTP-free form) with IFT27.

It is found in the cell projection. Its subcellular location is the cilium membrane. The protein localises to the cytoplasm. It localises to the cytoskeleton. The protein resides in the cilium axoneme. It is found in the cilium basal body. In terms of biological role, involved in membrane protein trafficking at the base of the ciliary organelle. Mediates recruitment onto plasma membrane of the BBSome complex which would constitute a coat complex required for sorting of specific membrane proteins to the primary cilia. Together with the BBSome complex and LTZL1, controls SMO ciliary trafficking and contributes to the sonic hedgehog (SHH) pathway regulation. May regulate cilia assembly and disassembly and subsequent ciliary signaling events such as the Wnt signaling cascade. Isoform 2 may be required for proper retinal function and organization. The polypeptide is ADP-ribosylation factor-like protein 6 (ARL6) (Bos taurus (Bovine)).